Reading from the N-terminus, the 676-residue chain is Envelope glycoprotein (676 aa).

An N-terminal signal peptide occupies residues 1–32 (MGASGILQLPRERFRKTSFFVWVIILFHKVFS). Topologically, residues 33 to 650 (IPLGVVHNNT…GSNWWTGWKQ (618 aa)) are extracellular. N-linked (GlcNAc...) asparagine; by host glycosylation occurs at asparagine 40. 5 disulfide bridges follow: cysteine 53–cysteine 609, cysteine 108–cysteine 135, cysteine 121–cysteine 147, cysteine 511–cysteine 556, and cysteine 601–cysteine 608. The receptor-binding stretch occupies residues 54–201 (RDKLSSTSQL…DFFQSPPLHE (148 aa)). 5 N-linked (GlcNAc...) asparagine; by host glycosylation sites follow: asparagine 204, asparagine 228, asparagine 257, asparagine 268, and asparagine 296. The mucin-like region stretch occupies residues 305 to 485 (ELSFVPVPET…LSGPGFLTNT (181 aa)). The interval 356-463 (IKGKDTMPTT…PTTLPEQHTA (108 aa)) is disordered. Over residues 361–374 (TMPTTVTGVPTTTP) the composition is skewed to low complexity. Residues 402-422 (TTQPAKTTSQPTNSTESTTLN) are compositionally biased toward polar residues. An N-linked (GlcNAc...) asparagine; by host glycan is attached at asparagine 414. A compositionally biased stretch (low complexity) spans 423-440 (PTSEPSSRGTGPSSPTVP). Residue asparagine 441 is glycosylated (N-linked (GlcNAc...) asparagine; by host). Over residues 452-463 (TTPTTLPEQHTA) the composition is skewed to polar residues. Positions 524–539 (GAAIGLAWIPYFGPAA) are fusion peptide. Positions 554–595 (LICGLRQLANETTQALQLFLRATTELRTFSILNRKAIDFLLQ) form a coiled coil. An N-linked (GlcNAc...) asparagine; by host glycan is attached at asparagine 563. The stretch at 615-634 (WTKNITDKIDQIIHDFVDNN) forms a coiled coil. Asparagine 618 carries N-linked (GlcNAc...) asparagine; by host glycosylation. A helical membrane pass occupies residues 651–671 (WVPAGIGITGVIIAIIALLCI). 2 S-palmitoyl cysteine; by host lipidation sites follow: cysteine 670 and cysteine 672. Over 672-676 (CKFML) the chain is Cytoplasmic.

Belongs to the filoviruses glycoprotein family. Homotrimer; each monomer consists of a GP1 and a GP2 subunit linked by disulfide bonds. The resulting peplomers (GP1,2) protrude from the virus surface as spikes. GP1 and GP2delta are part of GP1,2delta soluble complexes released by ectodomain shedding. GP1,2 interacts with host integrin ITGAV/alpha-V and CLEC10A. Also binds human CD209 and CLEC4M (collectively referred to as DC-SIGN(R)), as well as human FOLR1. Interacts with host entry receptor NPC1. Post-translationally, the signal peptide region modulates GP's high mannose glycosylation, thereby determining the efficiency of the interactions with DC-SIGN(R). N-glycosylated. In terms of processing, O-glycosylated in the mucin-like region. Post-translationally, palmitoylation of GP2 is not required for its function. Specific enzymatic cleavages in vivo yield mature proteins. The precursor is processed into GP1 and GP2 by host cell furin in the trans Golgi, and maybe by other host proteases, to yield the mature GP1 and GP2 proteins. The cleavage site corresponds to the furin optimal cleavage sequence [KR]-X-[KR]-R. This cleavage does not seem to be required for function. After the internalization of the virus into cell endosomes, GP1 C-terminus is removed by the endosomal proteases cathepsin B, cathepsin L, or both, leaving a 19-kDa N-terminal fragment which is further digested by cathepsin B. Proteolytic processing of GP1,2 by host ADAM17 can remove the transmembrane anchor of GP2 and leads to shedding of complexes consisting in GP1 and truncated GP2 (GP1,2delta).

It is found in the virion membrane. It localises to the host cell membrane. The protein localises to the secreted. Functionally, GP1 is responsible for binding to the receptor(s) on target cells. Interacts with CD209/DC-SIGN and CLEC4M/DC-SIGNR which act as cofactors for virus entry into the host cell. Binding to CD209 and CLEC4M, which are respectively found on dendritic cells (DCs), and on endothelial cells of liver sinusoids and lymph node sinuses, facilitate infection of macrophages and endothelial cells. These interactions not only facilitate virus cell entry, but also allow capture of viral particles by DCs and subsequent transmission to susceptible cells without DCs infection (trans infection). Binding to the macrophage specific lectin CLEC10A also seems to enhance virus infectivity. Interaction with FOLR1/folate receptor alpha may be a cofactor for virus entry in some cell types, although results are contradictory. Members of the Tyro3 receptor tyrosine kinase family also seem to be cell entry factors in filovirus infection. Once attached, the virions are internalized through clathrin-dependent endocytosis and/or macropinocytosis. After internalization of the virus into the endosomes of the host cell, proteolysis of GP1 by two cysteine proteases, CTSB/cathepsin B and CTSL/cathepsin L presumably induces a conformational change of GP2, unmasking its fusion peptide and initiating membranes fusion. In terms of biological role, GP2 acts as a class I viral fusion protein. Under the current model, the protein has at least 3 conformational states: pre-fusion native state, pre-hairpin intermediate state, and post-fusion hairpin state. During viral and target cell membrane fusion, the coiled coil regions (heptad repeats) assume a trimer-of-hairpins structure, positioning the fusion peptide in close proximity to the C-terminal region of the ectodomain. The formation of this structure appears to drive apposition and subsequent fusion of viral and target cell membranes. Responsible for penetration of the virus into the cell cytoplasm by mediating the fusion of the membrane of the endocytosed virus particle with the endosomal membrane. Low pH in endosomes induces an irreversible conformational change in GP2, releasing the fusion hydrophobic peptide. Its function is as follows. GP1,2 which is the disulfid-linked complex of GP1 and GP2, mediates endothelial cell activation and decreases endothelial barrier function. Mediates activation of primary macrophages. At terminal stages of the viral infection, when its expression is high, GP1,2 down-modulates the expression of various host cell surface molecules that are essential for immune surveillance and cell adhesion. Down-modulates integrins ITGA1, ITGA2, ITGA3, ITGA4, ITGA5, ITGA6, ITGAV and ITGB1. GP1,2 alters the cellular recycling of the dimer alpha-V/beta-3 via a dynamin-dependent pathway. Decrease in the host cell surface expression of various adhesion molecules may lead to cell detachment, contributing to the disruption of blood vessel integrity and hemorrhages developed during Ebola virus infection (cytotoxicity). This cytotoxicity appears late in the infection, only after the massive release of viral particles by infected cells. Down-modulation of host MHC-I, leading to altered recognition by immune cells, may explain the immune suppression and inflammatory dysfunction linked to Ebola infection. Also down-modulates EGFR surface expression. Counteracts the antiviral effect of host tetherin. GP2delta is part of the complex GP1,2delta released by host ADAM17 metalloprotease. This secreted complex may play a role in the pathogenesis of the virus by efficiently blocking the neutralizing antibodies that would otherwise neutralize the virus surface glycoproteins GP1,2. Might therefore contribute to the lack of inflammatory reaction seen during infection in spite the of extensive necrosis and massive virus production. GP1,2delta does not seem to be involved in activation of primary macrophages. The polypeptide is Envelope glycoprotein (GP) (Tai Forest ebolavirus (strain Cote d'Ivoire-94) (TAFV)).